The following is a 173-amino-acid chain: Large ribosomal subunit protein uL29c (173 aa).

Residues 1–60 constitute a chloroplast transit peptide; it reads MLSLSIATPGTAAIFRRGTASATSTSSSFHGVRIQHQVSARVPAAATISSSSPKPSVVMM. The tract at residues 143–173 is disordered; that stretch reads KKSIVPRPPPSLKKLQEEEAAEEAAEAAKSA. S172 is subject to Phosphoserine.

Belongs to the universal ribosomal protein uL29 family. As to quaternary structure, part of the 50S ribosomal subunit.

The protein resides in the plastid. Its subcellular location is the chloroplast. The protein is Large ribosomal subunit protein uL29c (RPL29) of Arabidopsis thaliana (Mouse-ear cress).